A 164-amino-acid polypeptide reads, in one-letter code: ATP synthase subunit b (164 aa).

Residues 6–26 (GELIGNFILITGSFILLLVLI) form a helical membrane-spanning segment.

The protein belongs to the ATPase B chain family. In terms of assembly, F-type ATPases have 2 components, F(1) - the catalytic core - and F(0) - the membrane proton channel. F(1) has five subunits: alpha(3), beta(3), gamma(1), delta(1), epsilon(1). F(0) has three main subunits: a(1), b(2) and c(10-14). The alpha and beta chains form an alternating ring which encloses part of the gamma chain. F(1) is attached to F(0) by a central stalk formed by the gamma and epsilon chains, while a peripheral stalk is formed by the delta and b chains.

Its subcellular location is the cell membrane. Functionally, f(1)F(0) ATP synthase produces ATP from ADP in the presence of a proton or sodium gradient. F-type ATPases consist of two structural domains, F(1) containing the extramembraneous catalytic core and F(0) containing the membrane proton channel, linked together by a central stalk and a peripheral stalk. During catalysis, ATP synthesis in the catalytic domain of F(1) is coupled via a rotary mechanism of the central stalk subunits to proton translocation. Its function is as follows. Component of the F(0) channel, it forms part of the peripheral stalk, linking F(1) to F(0). The protein is ATP synthase subunit b of Streptococcus pneumoniae serotype 2 (strain D39 / NCTC 7466).